The sequence spans 147 residues: Hemoglobin subunit beta (147 aa).

The Globin domain maps to 3 to 147 (EWTDDERAII…VVSALGRQYH (145 aa)). Residues His64 and His93 each coordinate heme b.

It belongs to the globin family. As to quaternary structure, heterotetramer of two alpha chains and two beta chains. In terms of tissue distribution, red blood cells.

Involved in oxygen transport from gills to the various peripheral tissues. In Melanogrammus aeglefinus (Haddock), this protein is Hemoglobin subunit beta (hbb).